A 419-amino-acid chain; its full sequence is UDP-N-acetylglucosamine 1-carboxyvinyltransferase (419 aa).

22–23 (KN) is a phosphoenolpyruvate binding site. R91 is a UDP-N-acetyl-alpha-D-glucosamine binding site. The active-site Proton donor is the C115. C115 carries the post-translational modification 2-(S-cysteinyl)pyruvic acid O-phosphothioketal. UDP-N-acetyl-alpha-D-glucosamine-binding positions include 120–124 (RPVDL), 160–163 (KVSV), D305, and V327.

Belongs to the EPSP synthase family. MurA subfamily.

The protein localises to the cytoplasm. The catalysed reaction is phosphoenolpyruvate + UDP-N-acetyl-alpha-D-glucosamine = UDP-N-acetyl-3-O-(1-carboxyvinyl)-alpha-D-glucosamine + phosphate. It functions in the pathway cell wall biogenesis; peptidoglycan biosynthesis. Functionally, cell wall formation. Adds enolpyruvyl to UDP-N-acetylglucosamine. In Salmonella agona (strain SL483), this protein is UDP-N-acetylglucosamine 1-carboxyvinyltransferase.